The chain runs to 407 residues: Putative F-box protein At5g60560 (407 aa).

The 48-residue stretch at 2–49 (TMMSDLSEDLVEEILCRVSITSLGAVRSTCKGWYVLSKTRVLCKAETK) folds into the F-box domain.

The chain is Putative F-box protein At5g60560 from Arabidopsis thaliana (Mouse-ear cress).